The primary structure comprises 234 residues: Dienlactone hydrolase 2 (234 aa).

Catalysis depends on residues cysteine 143, aspartate 167, and histidine 199.

Belongs to the dienelactone hydrolase family.

It functions in the pathway xenobiotic degradation. Functionally, dienlactone hydrolase; part of the Fusarium detoxification of benzoxazolinone cluster 2 (FDB2) involved in the degradation of benzoxazolinones produced by the host plant. Maize, wheat, and rye produce the 2 benzoxazinone phytoanticipins 2,4-dihy-droxy-7-methoxy-1,4-benzoxazin-3-one (DIMBOA) and 2,4-dihydroxy-1,4-benzoxazin-3-one (DIBOA) that, due to their inherent instability once released, spontaneously degrade to the more stable corresponding benzoxazolinones, 6-methoxy-2-benzoxazolinone (MBOA) and 2-benzoxazolinone (BOA), respectively. The first step in the detoxification of benzoxazolinones involves the hydrolysis of the cyclic ester bond of benzoxazolinones by the FDB1 cluster gamma-lactamase MBL1 to aminophenols. MBL1 is able to convert BOA into 2-aminophenol (2-AP), as well as MBOA into 5-methoxy-2-aminophenol (2-AMP). The FDB2 cluster N-malonyltransferase FDB2/NAT1 then metabolizes aminophenols via N-malonylation to non-toxic malonamic acids. FDB2/NAT1 converts 2-AP into N-(2-hydroxyphenyl) malonamic acid (HPMA) and 2-AMP into N-(2-hydroxy-4-methoxyphenyl) malonamic acid (HMPMA). The duplicated dienlactone hydrolases DLH1 and DLH2 may provide redundant function for hydrolyzing the lactone moiety in the BOA molecule. The roles of the amidases and other enzymes encoded by the 2 FDB clusters have not been identified so far. This is Dienlactone hydrolase 2 from Gibberella moniliformis (strain M3125 / FGSC 7600) (Maize ear and stalk rot fungus).